The chain runs to 516 residues: Lipid II flippase MurJ (516 aa).

Helical transmembrane passes span 93–113 (WALA…VFAV), 133–153 (IMFP…VLNT), 159–179 (LPAF…VFVA), 188–208 (ALAW…LPGL), 233–253 (VLAK…SLII), 275–295 (LMEF…LPSL), 317–337 (VTFL…TPLT), 358–378 (LATY…APGF), 390–409 (IAIG…VPLI), 448–468 (FFVQ…WCAI), and 483–503 (IALM…MLWV).

Belongs to the MurJ/MviN family.

It localises to the cell inner membrane. It functions in the pathway cell wall biogenesis; peptidoglycan biosynthesis. In terms of biological role, involved in peptidoglycan biosynthesis. Transports lipid-linked peptidoglycan precursors from the inner to the outer leaflet of the cytoplasmic membrane. This chain is Lipid II flippase MurJ, found in Burkholderia cenocepacia (strain ATCC BAA-245 / DSM 16553 / LMG 16656 / NCTC 13227 / J2315 / CF5610) (Burkholderia cepacia (strain J2315)).